We begin with the raw amino-acid sequence, 174 residues long: Ribosome maturation factor RimM (174 aa).

Residues 91 to 164 enclose the PRC barrel domain; sequence DDAWYPHQLQ…KVVLSPPGGL (74 aa).

It belongs to the RimM family. As to quaternary structure, binds ribosomal protein uS19.

Its subcellular location is the cytoplasm. Its function is as follows. An accessory protein needed during the final step in the assembly of 30S ribosomal subunit, possibly for assembly of the head region. Essential for efficient processing of 16S rRNA. May be needed both before and after RbfA during the maturation of 16S rRNA. It has affinity for free ribosomal 30S subunits but not for 70S ribosomes. The sequence is that of Ribosome maturation factor RimM from Kineococcus radiotolerans (strain ATCC BAA-149 / DSM 14245 / SRS30216).